The sequence spans 1075 residues: Flocculation protein FLO5 (1075 aa).

The signal sequence occupies residues 1 to 24; sequence MTIAHHCIFLVILAFLALINVASG. Residues 74–249 enclose the PA14 domain; that stretch reads GGQTDISIDY…GTTVSDNFEG (176 aa). Residues Asn135, Asn187, Asn203, and Asn262 are each glycosylated (N-linked (GlcNAc...) asparagine). The sugar recognition stretch occupies residues 197-240; that stretch reads DGSLPDNITGTVYMYAGYYYPLKVVYSNAVSWGTLPISVELPDG. Tandem repeats lie at residues 278-322, 323-367, 368-412, 413-457, 458-502, 503-547, 548-592, and 593-637. Residues 278–637 form an 8 X 45 AA approximate tandem repeats, Thr-rich region; it reads TTTEPWTGTF…RTPTTAISSS (360 aa). 4 stretches are compositionally biased toward low complexity: residues 322-345, 367-390, 457-480, and 547-570; these read TTTT…VTGT. Disordered stretches follow at residues 322-349, 366-394, 456-484, and 546-574; these read TTTT…NGQP and ITTT…NGQP. Asn663 is a glycosylation site (N-linked (GlcNAc...) asparagine). 2 tandem repeats follow at residues 667-686 and 687-706. The segment at 667–706 is 2 X 20 AA approximate tandem repeats, Ser-rich; the sequence is VISSSVISSSVTSSLVTSSSFISSSVISSSTTTSTSIFSE. The segment covering 702–762 has biased composition (low complexity); it reads SIFSESSTSS…SLPPVTSATT (61 aa). A disordered region spans residues 702–781; the sequence is SIFSESSTSS…PATTTKTSEQ (80 aa). N-linked (GlcNAc...) asparagine glycosylation occurs at Asn749. Positions 763–781 are enriched in polar residues; that stretch reads GQETASSLPPATTTKTSEQ. Tandem repeats lie at residues 775-825, 847-897, and 898-948. The interval 775–948 is 3 X 51 AA approximate repeats, Ser/Thr-rich; the sequence is TTKTSEQTTL…TVYPTWRPQT (174 aa). A compositionally biased stretch (polar residues) spans 948 to 958; that stretch reads TTNEQSVSSKM. Disordered regions lie at residues 948-980 and 1016-1038; these read TTNE…AVTS and SLTS…SSMV. 2 stretches are compositionally biased toward low complexity: residues 959–977 and 1016–1026; these read NSAT…TKTA and SLTSSGLSTMS. A compositionally biased stretch (polar residues) spans 1027–1038; it reads QQPRSTPASSMV. A lipid anchor (GPI-anchor amidated glycine) is attached at Gly1052. Positions 1053 to 1075 are cleaved as a propeptide — removed in mature form; the sequence is SANSLLAGSGLSVFIASLLLAII.

Belongs to the flocculin family. In terms of processing, extensively O-glycosylated. The GPI-anchor is attached to the protein in the endoplasmic reticulum and serves to target the protein to the cell surface. There, the glucosamine-inositol phospholipid moiety is cleaved off and the GPI-modified mannoprotein is covalently attached via its lipidless GPI glycan remnant to the 1,6-beta-glucan of the outer cell wall layer.

It localises to the secreted. It is found in the cell wall. The protein localises to the membrane. Functionally, cell wall protein that participates directly in adhesive cell-cell interactions during yeast flocculation, a reversible, asexual and Ca(2+)-dependent process in which cells adhere to form aggregates (flocs) consisting of thousands of cells. The lectin-like protein sticks out of the cell wall of flocculent cells and selectively binds mannose residues in the cell walls of adjacent cells. Activity is inhibited by mannose, but not by glucose, maltose, sucrose or galactose. This is Flocculation protein FLO5 (FLO5) from Saccharomyces cerevisiae (strain ATCC 204508 / S288c) (Baker's yeast).